Reading from the N-terminus, the 412-residue chain is G-protein coupled receptor homolog UL33 (412 aa).

The Virion surface segment spans residues 1 to 29 (MDTIIHNSTRNNTPPHINDTCNMTGPLFA). N-linked (GlcNAc...) asparagine; by host glycans are attached at residues N7, N18, and N22. Residues 30–54 (IRTTEAVLNTFIIFVGGPLNAIVLI) form a helical membrane-spanning segment. Over 55-70 (TQLLTNRVLGYSTPTI) the chain is Intravirion. The chain crosses the membrane as a helical span at residues 71–95 (YMTNLYSTNFLTLTVLPFIVLSNQW). At 96–102 (LLPAGVA) the chain is on the virion surface side. The helical transmembrane segment at 103–129 (SCKFLSVIYYSSCTVGFATVALIAADR) threads the bilayer. C104 and C188 are oxidised to a cystine. Over 130 to 138 (YRVLHKRTY) the chain is Intravirion. A helical membrane pass occupies residues 139–160 (ARQSYRSTYMILLLTWLAGLIF). Residues 161-203 (SVPAAVYTTVVMHHDANDTNNTNGHATCVLYFVAEEVHTVLLS) are Virion surface-facing. N-linked (GlcNAc...) asparagine; by host glycosylation is found at N177 and N180. A helical membrane pass occupies residues 204 to 224 (WKVLLTMVWGAAPVIMMTWFY). The Intravirion portion of the chain corresponds to 225 to 240 (AFFYSTVQRTSQKQRS). A helical membrane pass occupies residues 241-267 (RTLTFVSVLLISFVALQTPYVSLMIFN). Over 268–281 (SYATTAWPMQCEHL) the chain is Virion surface. Residues 282-305 (TLRRTIGTLARVVPHLHCLINPIL) form a helical membrane-spanning segment. Residues 306–412 (YALLGHDFLQ…SQSHHNLSGV (107 aa)) are Intravirion-facing. The disordered stretch occupies residues 377-412 (NFPSGTWKGGQKTASNDTSTKIPHRLSQSHHNLSGV). A compositionally biased stretch (polar residues) spans 388-397 (KTASNDTSTK).

Belongs to the G-protein coupled receptor 1 family. In terms of assembly, heterodimerizes with US28.

It is found in the virion. The protein resides in the host cell membrane. The protein localises to the host cytoplasm. In terms of biological role, G-protein-coupled receptor (vGPCR) that constitutively activates multiple oncogenic signaling pathways including STAT3, AP-1, phospholipase C, NF-kappa-B or cAMP-responsive element (CRE) pathways. Plays an important role in viral reactivation from latency through activation of host CREB1, facilitating its recruitment to the viral major immediate early (MIE) genes. In turn, expression of the MIE-driven genes such as UL123 are de-repressed. Also facilitates virus dissemination via the extracellular and cell-to-cell route. This is G-protein coupled receptor homolog UL33 (UL33) from Human cytomegalovirus (strain AD169) (HHV-5).